A 351-amino-acid chain; its full sequence is Glycerol-3-phosphate dehydrogenase [NAD(P)+] (351 aa).

Residues serine 18, tryptophan 19, arginine 38, and lysine 122 each coordinate NADPH. Positions 122, 153, and 155 each coordinate sn-glycerol 3-phosphate. NADPH is bound at residue alanine 157. Sn-glycerol 3-phosphate-binding residues include lysine 208, aspartate 261, serine 271, arginine 272, and asparagine 273. The active-site Proton acceptor is the lysine 208. Arginine 272 contributes to the NADPH binding site. Position 297 (glutamate 297) interacts with NADPH.

The protein belongs to the NAD-dependent glycerol-3-phosphate dehydrogenase family.

It localises to the cytoplasm. The catalysed reaction is sn-glycerol 3-phosphate + NAD(+) = dihydroxyacetone phosphate + NADH + H(+). The enzyme catalyses sn-glycerol 3-phosphate + NADP(+) = dihydroxyacetone phosphate + NADPH + H(+). It functions in the pathway membrane lipid metabolism; glycerophospholipid metabolism. Its function is as follows. Catalyzes the reduction of the glycolytic intermediate dihydroxyacetone phosphate (DHAP) to sn-glycerol 3-phosphate (G3P), the key precursor for phospholipid synthesis. The polypeptide is Glycerol-3-phosphate dehydrogenase [NAD(P)+] (Bordetella parapertussis (strain 12822 / ATCC BAA-587 / NCTC 13253)).